A 282-amino-acid polypeptide reads, in one-letter code: uncharacterized protein (282 aa).

Residues S4–Y80 form the HTH rpiR-type domain. Residues V40–R59 constitute a DNA-binding region (H-T-H motif). The 141-residue stretch at I125–E265 folds into the SIS domain.

This is an uncharacterized protein from Providencia stuartii.